A 53-amino-acid polypeptide reads, in one-letter code: Conotoxin Ac4.3b (53 aa).

Positions 1–11 (SDVRNAAVHER) are excised as a propeptide. Residue Q12 is modified to Pyrrolidone carboxylic acid. Residue E14 is modified to 4-carboxyglutamate. S18 is a glycosylation site (O-linked (HexNAc...) serine). 4-hydroxyproline is present on residues P28, P33, and P48. The residue at position 48 (P48) is a Proline amide. Positions 49-53 (GRRND) are excised as a propeptide.

This sequence belongs to the conotoxin A superfamily. In terms of processing, contains 3 disulfide bonds. Expressed by the venom duct.

The protein localises to the secreted. Its function is as follows. Probable neurotoxin with ion channel inhibitor activity. This chain is Conotoxin Ac4.3b, found in Conus achatinus (Little frog cone).